We begin with the raw amino-acid sequence, 232 residues long: 7-cyano-7-deazaguanine synthase (232 aa).

An ATP-binding site is contributed by 8-18 (FSGGQDSTTCL). Zn(2+) is bound by residues cysteine 189, cysteine 198, cysteine 201, and cysteine 204.

Belongs to the QueC family. Zn(2+) serves as cofactor.

It carries out the reaction 7-carboxy-7-deazaguanine + NH4(+) + ATP = 7-cyano-7-deazaguanine + ADP + phosphate + H2O + H(+). Its pathway is purine metabolism; 7-cyano-7-deazaguanine biosynthesis. In terms of biological role, catalyzes the ATP-dependent conversion of 7-carboxy-7-deazaguanine (CDG) to 7-cyano-7-deazaguanine (preQ(0)). This is 7-cyano-7-deazaguanine synthase from Proteus mirabilis (strain HI4320).